Consider the following 70-residue polypeptide: Putative microRNA 17 host gene protein (70 aa).

Over 1 to 20 the chain is Cytoplasmic; that stretch reads MFCHVDVKISSKRYTWTKLP. The helical transmembrane segment at 21 to 43 threads the bilayer; the sequence is LNVPKLVLIYLQSHFVLFFFSMC. The Extracellular portion of the chain corresponds to 44–70; it reads QSIWERPAIGRATTSSASWMVGYDCLL.

Highly expressed in B-cell lymphoma and lung cancer.

It is found in the membrane. This Homo sapiens (Human) protein is Putative microRNA 17 host gene protein (MIR17HG).